A 289-amino-acid chain; its full sequence is Diaminopimelate epimerase (289 aa).

Positions 17, 47, and 67 each coordinate substrate. C76 functions as the Proton donor in the catalytic mechanism. Residues 77–78, N164, N198, and 216–217 each bind substrate; these read GN and ER. Residue C225 is the Proton acceptor of the active site. 226–227 provides a ligand contact to substrate; the sequence is GS.

This sequence belongs to the diaminopimelate epimerase family. In terms of assembly, homodimer.

It localises to the cytoplasm. It catalyses the reaction (2S,6S)-2,6-diaminopimelate = meso-2,6-diaminopimelate. The protein operates within amino-acid biosynthesis; L-lysine biosynthesis via DAP pathway; DL-2,6-diaminopimelate from LL-2,6-diaminopimelate: step 1/1. Functionally, catalyzes the stereoinversion of LL-2,6-diaminopimelate (L,L-DAP) to meso-diaminopimelate (meso-DAP), a precursor of L-lysine and an essential component of the bacterial peptidoglycan. This is Diaminopimelate epimerase from Bradyrhizobium sp. (strain BTAi1 / ATCC BAA-1182).